The chain runs to 403 residues: S-adenosylmethionine sensor upstream of mTORC1 (403 aa).

Over residues 1–10 the composition is skewed to gly residues; that stretch reads MEPGPGGRGA. Residues 1-32 form a disordered region; sequence MEPGPGGRGAARGQRPPNAAQPREQERKLEQE. Positions 11 to 22 are enriched in low complexity; the sequence is ARGQRPPNAAQP. The span at 23–32 shows a compositional bias: basic and acidic residues; it reads REQERKLEQE. S-adenosyl-L-methionine-binding residues include Arg-93, Gly-170, Asp-188, Asp-200, Phe-201, and Ser-242.

It belongs to the BMT2/SAMTOR family. In terms of assembly, interacts with the GATOR1 complex; interaction is disrupted when SAMTOR binds S-adenosyl-L-methionine. Interacts with the KICSTOR complex; interaction is disrupted when SAMTOR binds S-adenosyl-L-methionine.

Functionally, S-adenosyl-L-methionine-binding protein that acts as an inhibitor of mTORC1 signaling via interaction with the GATOR1 and KICSTOR complexes. Acts as a sensor of S-adenosyl-L-methionine to signal methionine sufficiency to mTORC1: in presence of methionine, binds S-adenosyl-L-methionine, leading to disrupt interaction with the GATOR1 and KICSTOR complexes and promote mTORC1 signaling. Upon methionine starvation, S-adenosyl-L-methionine levels are reduced, thereby promoting the association with GATOR1 and KICSTOR, leading to inhibit mTORC1 signaling. Probably also acts as a S-adenosyl-L-methionine-dependent methyltransferase. This is S-adenosylmethionine sensor upstream of mTORC1 from Mus musculus (Mouse).